We begin with the raw amino-acid sequence, 235 residues long: MDIKLKDFEGPLDLLLHLVSKYEVDIYDVPIVDIIEQYLAYIATLQAMKLEVAGEYMVMASQLMLIKSRKLLPKVVETIEAEEDPELQLLHQIEEYRTYKLLGEELALKHNERAQRFSKPKLELIYDDITLKQDKTVLDVFLAFSKVMAEKQEEIKNSHTTIKSDDYRIEDIMTVVEEQVIRQKETNLSWFFKRAGSLNEIITIFLAALELIKVHRVYVKQEHNFDDIILRKESA.

The protein belongs to the ScpA family. In terms of assembly, component of a cohesin-like complex composed of ScpA, ScpB and the Smc homodimer, in which ScpA and ScpB bind to the head domain of Smc. The presence of the three proteins is required for the association of the complex with DNA.

Its subcellular location is the cytoplasm. In terms of biological role, participates in chromosomal partition during cell division. May act via the formation of a condensin-like complex containing Smc and ScpB that pull DNA away from mid-cell into both cell halves. In Streptococcus mutans serotype c (strain ATCC 700610 / UA159), this protein is Segregation and condensation protein A.